The sequence spans 275 residues: Large ribosomal subunit protein uL2c (275 aa).

The interval 225–256 (AMNAVDHPHGGGEGRSPIGRSQPSTPWGRPAL) is disordered.

This sequence belongs to the universal ribosomal protein uL2 family. In terms of assembly, part of the 50S ribosomal subunit.

The protein localises to the plastid. Its subcellular location is the chloroplast. This Cyanidium caldarium (Red alga) protein is Large ribosomal subunit protein uL2c (rpl2).